Here is a 36-residue protein sequence, read N- to C-terminus: Photosystem I reaction center subunit VIII (36 aa).

The chain crosses the membrane as a helical span at residues 9-29 (ILVPLVGLIFPALSMALLFIY).

This sequence belongs to the PsaI family.

The protein resides in the plastid. Its subcellular location is the chloroplast thylakoid membrane. Functionally, may help in the organization of the PsaL subunit. The polypeptide is Photosystem I reaction center subunit VIII (Pyropia yezoensis (Susabi-nori)).